The sequence spans 287 residues: Diphthine methyl ester synthase (287 aa).

Residues leucine 9, aspartate 84, glycine 87, 112–113 (SI), leucine 163, valine 221, and histidine 248 each bind S-adenosyl-L-methionine.

It belongs to the diphthine synthase family.

The protein resides in the cytoplasm. It catalyses the reaction 2-[(3S)-amino-3-carboxypropyl]-L-histidyl-[translation elongation factor 2] + 4 S-adenosyl-L-methionine = diphthine methyl ester-[translation elongation factor 2] + 4 S-adenosyl-L-homocysteine + 3 H(+). Its pathway is protein modification; peptidyl-diphthamide biosynthesis. Functionally, S-adenosyl-L-methionine-dependent methyltransferase that catalyzes four methylations of the modified target histidine residue in translation elongation factor 2 (EF-2), to form an intermediate called diphthine methyl ester. The four successive methylation reactions represent the second step of diphthamide biosynthesis. This chain is Diphthine methyl ester synthase (dph-5), found in Neurospora crassa (strain ATCC 24698 / 74-OR23-1A / CBS 708.71 / DSM 1257 / FGSC 987).